The chain runs to 317 residues: Aspartate carbamoyltransferase catalytic subunit (317 aa).

2 residues coordinate carbamoyl phosphate: Arg66 and Thr67. Lys94 provides a ligand contact to L-aspartate. Residues Arg116, His144, and Gln147 each coordinate carbamoyl phosphate. Residues Arg177 and Arg231 each contribute to the L-aspartate site. 2 residues coordinate carbamoyl phosphate: Gly272 and Pro273.

Belongs to the aspartate/ornithine carbamoyltransferase superfamily. ATCase family. Heterododecamer (2C3:3R2) of six catalytic PyrB chains organized as two trimers (C3), and six regulatory PyrI chains organized as three dimers (R2).

It catalyses the reaction carbamoyl phosphate + L-aspartate = N-carbamoyl-L-aspartate + phosphate + H(+). The protein operates within pyrimidine metabolism; UMP biosynthesis via de novo pathway; (S)-dihydroorotate from bicarbonate: step 2/3. Its function is as follows. Catalyzes the condensation of carbamoyl phosphate and aspartate to form carbamoyl aspartate and inorganic phosphate, the committed step in the de novo pyrimidine nucleotide biosynthesis pathway. This Nitrobacter hamburgensis (strain DSM 10229 / NCIMB 13809 / X14) protein is Aspartate carbamoyltransferase catalytic subunit.